We begin with the raw amino-acid sequence, 399 residues long: Elongation factor Tu (399 aa).

The region spanning 10 to 209 (KPHVNIGTIG…AVDDYIPTPV (200 aa)) is the tr-type G domain. The segment at 19 to 26 (GHVDHGKT) is G1. Residue 19–26 (GHVDHGKT) participates in GTP binding. Threonine 26 is a Mg(2+) binding site. The tract at residues 62–66 (GITIN) is G2. The G3 stretch occupies residues 83-86 (DCPG). GTP-binding positions include 83–87 (DCPGH) and 138–141 (NKCD). The tract at residues 138–141 (NKCD) is G4. The G5 stretch occupies residues 175–177 (SAY).

Belongs to the TRAFAC class translation factor GTPase superfamily. Classic translation factor GTPase family. EF-Tu/EF-1A subfamily. As to quaternary structure, monomer.

It localises to the cytoplasm. It catalyses the reaction GTP + H2O = GDP + phosphate + H(+). In terms of biological role, GTP hydrolase that promotes the GTP-dependent binding of aminoacyl-tRNA to the A-site of ribosomes during protein biosynthesis. In Bifidobacterium longum subsp. infantis (strain ATCC 15697 / DSM 20088 / JCM 1222 / NCTC 11817 / S12), this protein is Elongation factor Tu.